Consider the following 548-residue polypeptide: Chaperonin GroEL (548 aa).

ATP-binding positions include 29–32 (TLGP), K50, 86–90 (DGTTT), G413, 479–481 (NAA), and D496.

Belongs to the chaperonin (HSP60) family. In terms of assembly, forms a cylinder of 14 subunits composed of two heptameric rings stacked back-to-back. Interacts with the co-chaperonin GroES.

The protein localises to the cytoplasm. It carries out the reaction ATP + H2O + a folded polypeptide = ADP + phosphate + an unfolded polypeptide.. Its function is as follows. Together with its co-chaperonin GroES, plays an essential role in assisting protein folding. The GroEL-GroES system forms a nano-cage that allows encapsulation of the non-native substrate proteins and provides a physical environment optimized to promote and accelerate protein folding. The chain is Chaperonin GroEL from Deinococcus radiodurans (strain ATCC 13939 / DSM 20539 / JCM 16871 / CCUG 27074 / LMG 4051 / NBRC 15346 / NCIMB 9279 / VKM B-1422 / R1).